The sequence spans 278 residues: ADP-dependent (S)-NAD(P)H-hydrate dehydratase (278 aa).

Residues 4-276 (DDDLVRQVIR…KAIPSWMKKL (273 aa)) enclose the YjeF C-terminal domain. (6S)-NADPHX-binding residues include A39, G102, and H152. G216 lines the AMP pocket. D217 contributes to the (6S)-NADPHX binding site.

The protein belongs to the NnrD/CARKD family. In terms of assembly, homotetramer. Mg(2+) is required as a cofactor.

The enzyme catalyses (6S)-NADHX + ADP = AMP + phosphate + NADH + H(+). It carries out the reaction (6S)-NADPHX + ADP = AMP + phosphate + NADPH + H(+). In terms of biological role, catalyzes the dehydration of the S-form of NAD(P)HX at the expense of ADP, which is converted to AMP. Together with NAD(P)HX epimerase, which catalyzes the epimerization of the S- and R-forms, the enzyme allows the repair of both epimers of NAD(P)HX, a damaged form of NAD(P)H that is a result of enzymatic or heat-dependent hydration. In Streptococcus thermophilus, this protein is ADP-dependent (S)-NAD(P)H-hydrate dehydratase.